Consider the following 134-residue polypeptide: MGSFFSTMFTPPPAADDGGDSRVVAVHSTATWDEQWGAHKSNPNKLIVIDFSATWCGPCRFIEPAFKDMAGRFADAVFFKIDVDELSEVARQWKVEAMPTFVLIKGGKEVSRVVGAKKDELERKVNMFISSSSS.

The interval 1–20 (MGSFFSTMFTPPPAADDGGD) is disordered. A Thioredoxin domain is found at 3 to 130 (SFFSTMFTPP…LERKVNMFIS (128 aa)). Catalysis depends on nucleophile residues cysteine 56 and cysteine 59. The cysteines at positions 56 and 59 are disulfide-linked.

Belongs to the thioredoxin family. Plant H-type subfamily.

It is found in the cytoplasm. Its function is as follows. Probable thiol-disulfide oxidoreductase that may be involved in the redox regulation of a number of cytosolic enzymes. The chain is Thioredoxin H2-2 from Oryza sativa subsp. japonica (Rice).